The chain runs to 148 residues: Large ribosomal subunit protein uL13 (148 aa).

This sequence belongs to the universal ribosomal protein uL13 family. Part of the 50S ribosomal subunit.

In terms of biological role, this protein is one of the early assembly proteins of the 50S ribosomal subunit, although it is not seen to bind rRNA by itself. It is important during the early stages of 50S assembly. The chain is Large ribosomal subunit protein uL13 from Lacticaseibacillus casei (strain BL23) (Lactobacillus casei).